The following is a 93-amino-acid chain: Putative pterin-4-alpha-carbinolamine dehydratase (93 aa).

Belongs to the pterin-4-alpha-carbinolamine dehydratase family.

The catalysed reaction is (4aS,6R)-4a-hydroxy-L-erythro-5,6,7,8-tetrahydrobiopterin = (6R)-L-erythro-6,7-dihydrobiopterin + H2O. This chain is Putative pterin-4-alpha-carbinolamine dehydratase, found in Synechococcus sp. (strain WH7803).